The following is a 72-amino-acid chain: Long neurotoxin OH-5 (72 aa).

5 disulfides stabilise this stretch: Cys3–Cys22, Cys15–Cys43, Cys28–Cys32, Cys47–Cys58, and Cys59–Cys64.

It belongs to the three-finger toxin family. Long-chain subfamily. Type II alpha-neurotoxin sub-subfamily. As to expression, expressed by the venom gland.

It localises to the secreted. In terms of biological role, binds with high affinity to muscular (alpha-1/CHRNA1) and neuronal (alpha-7/CHRNA7) nicotinic acetylcholine receptor (nAChR) and inhibits acetylcholine from binding to the receptor, thereby impairing neuromuscular and neuronal transmission. This is Long neurotoxin OH-5 from Ophiophagus hannah (King cobra).